We begin with the raw amino-acid sequence, 215 residues long: dITP/XTP pyrophosphatase (215 aa).

Position 13 to 18 (threonine 13 to lysine 18) interacts with substrate. Aspartate 74 serves as the catalytic Proton acceptor. A Mg(2+)-binding site is contributed by aspartate 74. Substrate is bound by residues serine 75, phenylalanine 163–aspartate 166, lysine 186, and histidine 199–arginine 200.

The protein belongs to the HAM1 NTPase family. In terms of assembly, homodimer. Requires Mg(2+) as cofactor.

The enzyme catalyses XTP + H2O = XMP + diphosphate + H(+). It catalyses the reaction dITP + H2O = dIMP + diphosphate + H(+). The catalysed reaction is ITP + H2O = IMP + diphosphate + H(+). Its function is as follows. Pyrophosphatase that catalyzes the hydrolysis of nucleoside triphosphates to their monophosphate derivatives, with a high preference for the non-canonical purine nucleotides XTP (xanthosine triphosphate), dITP (deoxyinosine triphosphate) and ITP. Seems to function as a house-cleaning enzyme that removes non-canonical purine nucleotides from the nucleotide pool, thus preventing their incorporation into DNA/RNA and avoiding chromosomal lesions. In Bartonella quintana (strain Toulouse) (Rochalimaea quintana), this protein is dITP/XTP pyrophosphatase.